A 56-amino-acid chain; its full sequence is Prokaryotic ubiquitin-like protein UBact (56 aa).

Residues 1–56 form a disordered region; sequence MPDQAQKTRPVGPGPSGGGEGPGSPKVEKPNTEELLKRMRKVDPDQAKRYRQRTGQ. Over residues 26–48 the composition is skewed to basic and acidic residues; that stretch reads KVEKPNTEELLKRMRKVDPDQAK. At Q56 the chain carries Deamidated glutamine. Q56 participates in a covalent cross-link: Isoglutamyl lysine isopeptide (Gln-Lys) (interchain with K-? in acceptor proteins).

This sequence belongs to the ubiquitin-like protein UBact family. In terms of processing, may be modified by deamidation of its C-terminal glutamine to glutamate by the adjacently encoded deamidase. This could be a prerequisite to the subsequent conjugation, as shown in the other prokaryotic ubiquitin-like protein Pup.

May function as a protein modifier covalently attached to lysine residues of substrate proteins. This may serve to target the modified proteins for degradation by proteasomes. The polypeptide is Prokaryotic ubiquitin-like protein UBact (Pedosphaera parvula (strain Ellin514)).